Here is a 487-residue protein sequence, read N- to C-terminus: 3-octaprenyl-4-hydroxybenzoate carboxy-lyase (487 aa).

Asn172 contributes to the Mn(2+) binding site. Prenylated FMN contacts are provided by residues 175–177, 189–191, and 194–195; these read IYR, RWL, and RG. Glu238 contacts Mn(2+). The active-site Proton donor is the Asp287.

Belongs to the UbiD family. As to quaternary structure, homohexamer. Requires prenylated FMN as cofactor. The cofactor is Mn(2+).

It localises to the cell membrane. The catalysed reaction is a 4-hydroxy-3-(all-trans-polyprenyl)benzoate + H(+) = a 2-(all-trans-polyprenyl)phenol + CO2. It functions in the pathway cofactor biosynthesis; ubiquinone biosynthesis. In terms of biological role, catalyzes the decarboxylation of 3-octaprenyl-4-hydroxy benzoate to 2-octaprenylphenol, an intermediate step in ubiquinone biosynthesis. The polypeptide is 3-octaprenyl-4-hydroxybenzoate carboxy-lyase (Actinobacillus pleuropneumoniae serotype 3 (strain JL03)).